The sequence spans 311 residues: Heparan sulfate glucosamine 3-O-sulfotransferase 1 (311 aa).

A signal peptide spans 1–20 (MTLLLLGAVLLVAQPQLVPS). N-linked (GlcNAc...) asparagine glycosylation occurs at N52. Residues 68-72 (KGGTR), R151, and S159 contribute to the 3'-phosphoadenylyl sulfate site. N196, N246, and N253 each carry an N-linked (GlcNAc...) asparagine glycan. Y259 is a binding site for 3'-phosphoadenylyl sulfate. A disulfide bridge links C260 with C269. Position 274–278 (274–278 (KGRAH)) interacts with 3'-phosphoadenylyl sulfate.

It belongs to the sulfotransferase 1 family.

It is found in the golgi apparatus lumen. The enzyme catalyses alpha-D-glucosaminyl-[heparan sulfate](n) + 3'-phosphoadenylyl sulfate = 3-sulfo-alpha-D-glucosaminyl-[heparan sulfate](n) + adenosine 3',5'-bisphosphate + H(+). Sulfotransferase that utilizes 3'-phospho-5'-adenylyl sulfate (PAPS) to catalyze the transfer of a sulfo group to position 3 of glucosamine residues in heparan. Catalyzes the rate limiting step in the biosynthesis of heparan sulfate (HSact). This modification is a crucial step in the biosynthesis of anticoagulant heparan sulfate as it completes the structure of the antithrombin pentasaccharide binding site. This chain is Heparan sulfate glucosamine 3-O-sulfotransferase 1 (Hs3st1), found in Rattus norvegicus (Rat).